The following is a 171-amino-acid chain: Crossover junction endodeoxyribonuclease RuvC (171 aa).

Residues Asp11, Glu71, and Asp143 contribute to the active site. Residues Asp11, Glu71, and Asp143 each coordinate Mg(2+).

The protein belongs to the RuvC family. Homodimer which binds Holliday junction (HJ) DNA. The HJ becomes 2-fold symmetrical on binding to RuvC with unstacked arms; it has a different conformation from HJ DNA in complex with RuvA. In the full resolvosome a probable DNA-RuvA(4)-RuvB(12)-RuvC(2) complex forms which resolves the HJ. Mg(2+) is required as a cofactor.

It is found in the cytoplasm. It carries out the reaction Endonucleolytic cleavage at a junction such as a reciprocal single-stranded crossover between two homologous DNA duplexes (Holliday junction).. The RuvA-RuvB-RuvC complex processes Holliday junction (HJ) DNA during genetic recombination and DNA repair. Endonuclease that resolves HJ intermediates. Cleaves cruciform DNA by making single-stranded nicks across the HJ at symmetrical positions within the homologous arms, yielding a 5'-phosphate and a 3'-hydroxyl group; requires a central core of homology in the junction. The consensus cleavage sequence is 5'-(A/T)TT(C/G)-3'. Cleavage occurs on the 3'-side of the TT dinucleotide at the point of strand exchange. HJ branch migration catalyzed by RuvA-RuvB allows RuvC to scan DNA until it finds its consensus sequence, where it cleaves and resolves the cruciform DNA. In Bartonella tribocorum (strain CIP 105476 / IBS 506), this protein is Crossover junction endodeoxyribonuclease RuvC.